The primary structure comprises 581 residues: A-type ATP synthase subunit A (581 aa).

Residue 234–241 (GPFGSGKT) coordinates ATP.

This sequence belongs to the ATPase alpha/beta chains family. Has multiple subunits with at least A(3), B(3), C, D, E, F, H, I and proteolipid K(x).

The protein localises to the cell membrane. It carries out the reaction ATP + H2O + 4 H(+)(in) = ADP + phosphate + 5 H(+)(out). Its function is as follows. Component of the A-type ATP synthase that produces ATP from ADP in the presence of a proton gradient across the membrane. The A chain is the catalytic subunit. The protein is A-type ATP synthase subunit A of Archaeoglobus fulgidus (strain ATCC 49558 / DSM 4304 / JCM 9628 / NBRC 100126 / VC-16).